The sequence spans 132 residues: uncharacterized protein (132 aa).

A signal peptide spans 1–17; it reads MCPECFFLMLFFCGYRA. Over residues 25 to 39 the composition is skewed to low complexity; the sequence is SSSSSSSSSSSFRSS. Positions 25–79 are disordered; the sequence is SSSSSSSSSSSFRSSPAYGFSGRPPGGAGCRERSQRSCLRPGGLPSLTRNPGLQR.

This is an uncharacterized protein from Escherichia coli (strain K12).